Reading from the N-terminus, the 610-residue chain is T-cell immunomodulatory protein (610 aa).

An N-terminal signal peptide occupies residues M1–A32. 8 N-linked (GlcNAc...) asparagine glycosylation sites follow: N35, N94, N123, N138, N145, N150, N175, and N241. Residues L98–W135 form an FG-GAP 1; atypical repeat. An FG-GAP 2; atypical repeat occupies F153 to L183. One copy of the FG-GAP 3; atypical repeat lies at V256–M291. N-linked (GlcNAc...) asparagine glycans are attached at residues N351, N369, and N480. A helical membrane pass occupies residues I564–A584.

The protein belongs to the TIP family. As to quaternary structure, interacts with RUVBL1, RUVBL2 and alpha-tubulin.

The protein localises to the secreted. Its subcellular location is the cell membrane. In terms of biological role, modulator of T-cell function. Has a protective effect in graft versus host disease model. The chain is T-cell immunomodulatory protein from Rattus norvegicus (Rat).